Here is a 483-residue protein sequence, read N- to C-terminus: NAD-dependent protein deacetylase SRT1 (483 aa).

The Deacetylase sirtuin-type domain maps to 27-270 (PELLHKKIEE…MYMMNLRIPP (244 aa)). NAD(+)-binding positions include 53–57 (AGIST), 63–65 (DFR), and 114–117 (QNVD). The active-site Proton acceptor is His-134. Residues Cys-142, Cys-145, Cys-167, and Cys-172 each coordinate Zn(2+). NAD(+) contacts are provided by residues 209–211 (GTS) and 235–237 (NLQ).

The protein belongs to the sirtuin family. Class IV subfamily. Zn(2+) serves as cofactor.

It localises to the nucleus. It carries out the reaction N(6)-acetyl-L-lysyl-[protein] + NAD(+) + H2O = 2''-O-acetyl-ADP-D-ribose + nicotinamide + L-lysyl-[protein]. Its function is as follows. NAD-dependent protein deacetylase. Has deacetylase activity towards H3K9Ac. May have a function in the safeguard against genome instability and DNA damage to ensure plant cell growth. May negatively regulate metabolic signal transduction involving methanol and jasmonates during leaf senescence. Required for histone H3K9Ac deacetylation and repression of AP2-1/RSR1 and amylase genes during early seed development. Functions as an epigenetic regulator to repress the expression of glycolytic genes and glycolysis in seedlings. Reduces lysine acetylation of the glycolytic glyceraldehyde-3-phosphate dehydrogenase (GAPDH), which is found to also function as an activator of glycolytic gene expression. This is NAD-dependent protein deacetylase SRT1 from Oryza sativa subsp. indica (Rice).